Reading from the N-terminus, the 30-residue chain is Platelet factor 4 (30 aa).

Belongs to the intercrine alpha (chemokine CxC) family. In terms of assembly, homotetramer. Interacts with TNFAIP6 (via Link domain). Interacts with CCR1. Interacts with CXCR3. Post-translationally, binds non-covalently to a proteoglycan molecule.

The protein resides in the secreted. Functionally, chemokine released during platelet aggregation that plays a role in different biological processes including hematopoiesis, cell proliferation, differentiation, and activation. Acts via different functional receptors including CCR1, CXCR3A or CXCR3B. Upon interaction with CXCR3A receptor, induces activated T-lymphocytes migration mediated via downstream Ras/extracellular signal-regulated kinase (ERK) signaling. Neutralizes the anticoagulant effect of heparin by binding more strongly to heparin than to the chondroitin-4-sulfate chains of the carrier molecule. Plays a role in the inhibition of hematopoiesis and in the maintenance of hematopoietic stem cell (HSC) quiescence. Chemotactic for neutrophils and monocytes via CCR1. Inhibits endothelial cell proliferation. In cooperation with toll-like receptor 8/TLR8, induces chromatin remodeling and activates inflammatory gene expression via the TBK1-IRF5 axis. In addition, induces myofibroblast differentiation and collagen synthesis in different precursor cells, including endothelial cells, by stimulating endothelial-to-mesenchymal transition. The protein is Platelet factor 4 (PF4) of Oryctolagus cuniculus (Rabbit).